Consider the following 1076-residue polypeptide: DNA-directed RNA polymerase subunit beta (1076 aa).

The protein belongs to the RNA polymerase beta chain family. As to quaternary structure, in plastids the minimal PEP RNA polymerase catalytic core is composed of four subunits: alpha, beta, beta', and beta''. When a (nuclear-encoded) sigma factor is associated with the core the holoenzyme is formed, which can initiate transcription.

The protein resides in the plastid. It is found in the chloroplast. The enzyme catalyses RNA(n) + a ribonucleoside 5'-triphosphate = RNA(n+1) + diphosphate. DNA-dependent RNA polymerase catalyzes the transcription of DNA into RNA using the four ribonucleoside triphosphates as substrates. In Agrostis stolonifera (Creeping bentgrass), this protein is DNA-directed RNA polymerase subunit beta.